The following is a 225-amino-acid chain: Cytidylate kinase (225 aa).

Position 11-19 (11-19) interacts with ATP; sequence GPAAAGKST.

Belongs to the cytidylate kinase family. Type 1 subfamily.

Its subcellular location is the cytoplasm. The enzyme catalyses CMP + ATP = CDP + ADP. It catalyses the reaction dCMP + ATP = dCDP + ADP. This Anoxybacillus flavithermus (strain DSM 21510 / WK1) protein is Cytidylate kinase.